The chain runs to 409 residues: Dual-specificity RNA methyltransferase RlmN (409 aa).

Residue Glu121 is the Proton acceptor of the active site. Residues 127-376 (EEGRGTLCIS…IRTPRGRDIL (250 aa)) enclose the Radical SAM core domain. A disulfide bridge connects residues Cys134 and Cys379. Residues Cys141, Cys145, and Cys148 each contribute to the [4Fe-4S] cluster site. S-adenosyl-L-methionine is bound by residues 205–206 (GE), Ser237, 259–261 (SLH), and Asn336. The active-site S-methylcysteine intermediate is the Cys379.

Belongs to the radical SAM superfamily. RlmN family. It depends on [4Fe-4S] cluster as a cofactor.

The protein localises to the cytoplasm. The enzyme catalyses adenosine(2503) in 23S rRNA + 2 reduced [2Fe-2S]-[ferredoxin] + 2 S-adenosyl-L-methionine = 2-methyladenosine(2503) in 23S rRNA + 5'-deoxyadenosine + L-methionine + 2 oxidized [2Fe-2S]-[ferredoxin] + S-adenosyl-L-homocysteine. It carries out the reaction adenosine(37) in tRNA + 2 reduced [2Fe-2S]-[ferredoxin] + 2 S-adenosyl-L-methionine = 2-methyladenosine(37) in tRNA + 5'-deoxyadenosine + L-methionine + 2 oxidized [2Fe-2S]-[ferredoxin] + S-adenosyl-L-homocysteine. Functionally, specifically methylates position 2 of adenine 2503 in 23S rRNA and position 2 of adenine 37 in tRNAs. m2A2503 modification seems to play a crucial role in the proofreading step occurring at the peptidyl transferase center and thus would serve to optimize ribosomal fidelity. The protein is Dual-specificity RNA methyltransferase RlmN of Rhizobium etli (strain ATCC 51251 / DSM 11541 / JCM 21823 / NBRC 15573 / CFN 42).